Consider the following 76-residue polypeptide: UPF0346 protein OEOE_1017 (76 aa).

The protein belongs to the UPF0346 family.

The polypeptide is UPF0346 protein OEOE_1017 (Oenococcus oeni (strain ATCC BAA-331 / PSU-1)).